The chain runs to 152 residues: Sulfur-rich protein (152 aa).

The interval 1-20 (MSTVPVVQGAGSSNSAQDIS) is disordered. Helical transmembrane passes span 43 to 63 (VGLVVIGLLLVIATLIFLVSA) and 69 to 89 (AIYLVAIPAILGCVNICVGIL).

The protein localises to the membrane. The polypeptide is Sulfur-rich protein (srp) (Chlamydia trachomatis serovar A (strain ATCC VR-571B / DSM 19440 / HAR-13)).